The sequence spans 623 residues: (-)-limonene synthase TPS1, chloroplastic (623 aa).

A chloroplast-targeting transit peptide spans 1 to 60; the sequence is MQCIAFHQFASSSSLPIWSSIDNRFTPKTSITSISKPKPKLKSKSNLKSRSRSSTCYPIQ. The segment at 29–52 is disordered; the sequence is TSITSISKPKPKLKSKSNLKSRSR. A compositionally biased stretch (basic residues) spans 37-51; the sequence is PKPKLKSKSNLKSRS. Residues Arg-337, Asp-374, Asp-378, Arg-516, and Asp-519 each contribute to the (2E)-geranyl diphosphate site. Asp-374 and Asp-378 together coordinate Mg(2+). Residues 374–378 carry the DDXXD motif motif; it reads DDMHD. Mg(2+)-binding residues include Asp-519, Thr-523, and Glu-527.

It belongs to the terpene synthase family. Tpsb subfamily. Requires Mg(2+) as cofactor. Mn(2+) is required as a cofactor. The cofactor is K(+). Trichome.

It localises to the plastid. Its subcellular location is the chloroplast. It catalyses the reaction (2E)-geranyl diphosphate = (4S)-limonene + diphosphate. It carries out the reaction (2E)-geranyl diphosphate = terpinolene + diphosphate. The enzyme catalyses (2E)-geranyl diphosphate = (1R,5R)-alpha-pinene + diphosphate. The catalysed reaction is (2E)-geranyl diphosphate = (1R,5R)-beta-pinene + diphosphate. It catalyses the reaction (2E)-geranyl diphosphate = beta-myrcene + diphosphate. It carries out the reaction (2E)-geranyl diphosphate = (4R)-limonene + diphosphate. Its pathway is secondary metabolite biosynthesis; terpenoid biosynthesis. It functions in the pathway terpene metabolism; (4S)-limonene biosynthesis; (4S)-limonene from geranyl diphosphate: step 1/1. Involved in monoterpene (C10) olefins biosynthesis, constituants of cannabinoids and terpenoids-rich resins. Catalyzes mainly the conversion of (2E)-geranyl diphosphate to (-)-limonene, and also produces minor products such as (+)-limonene, (+)-alpha-pinene, terpinolene, (+)-beta-pinene and beta-myrcene. This chain is (-)-limonene synthase TPS1, chloroplastic, found in Cannabis sativa (Hemp).